Consider the following 182-residue polypeptide: ADP-ribosylation factor-like protein 3 (182 aa).

The N-myristoyl glycine moiety is linked to residue glycine 2. Residue serine 5 is modified to Phosphoserine. GTP contacts are provided by residues 24–31 (GLDNAGKT), threonine 48, 67–71 (DIGGQ), glycine 70, 126–129 (NKQD), and 159–161 (SAL). Mg(2+)-binding residues include threonine 31 and threonine 48.

It belongs to the small GTPase superfamily. Arf family. In terms of assembly, found in a complex with ARL3, RP2 and UNC119 (or UNC119B); RP2 induces hydrolysis of GTP ARL3 in the complex, leading to the release of UNC119 (or UNC119B). Interacts with RP2; interaction is direct and stimulated with the activated GTP-bound form of ARL3. Interacts with SYS1. Interacts with ARL2BP; the GTP-bound form interacts with ARL2BP. Microtubule-associated protein. Does not interact with TBCC. Interacts with RP2. Interacts with PDE6D; the interaction occurs specifically with the GTP-bound form of ARL3. Interacts with GGA1; the interaction recruits PKD1:PKD2 complex to trans-Golgi network and is required for ciliary targeting of PKD1:PKD2 complex. Interacts with DNAAF9.

It is found in the golgi apparatus membrane. It localises to the cytoplasm. The protein resides in the cytoskeleton. Its subcellular location is the spindle. The protein localises to the nucleus. It is found in the microtubule organizing center. It localises to the centrosome. The protein resides in the cell projection. Its subcellular location is the cilium. In terms of biological role, small GTP-binding protein which cycles between an inactive GDP-bound and an active GTP-bound form, and the rate of cycling is regulated by guanine nucleotide exchange factors (GEF) and GTPase-activating proteins (GAP). Required for normal cytokinesis and cilia signaling. Requires assistance from GTPase-activating proteins (GAPs) like RP2 and PDE6D, in order to cycle between inactive GDP-bound and active GTP-bound forms. Required for targeting proteins to the cilium, including myristoylated NPHP3 and prenylated INPP5E. Targets NPHP3 to the ciliary membrane by releasing myristoylated NPHP3 from UNC119B cargo adapter into the cilium. Required for PKD1:PKD2 complex targeting from the trans-Golgi network to the cilium. This is ADP-ribosylation factor-like protein 3 (ARL3) from Bos taurus (Bovine).